We begin with the raw amino-acid sequence, 677 residues long: Pro-neuregulin-1, membrane-bound isoform (677 aa).

Basic and acidic residues predominate over residues 1 to 12 (MAEKKKVKEGKG). Disordered stretches follow at residues 1-43 (MAEK…KEIK) and 78-106 (GAKN…ISKA). Residues 1–260 (MAEKKKVKEG…MEAEELYQKR (260 aa)) lie on the Extracellular side of the membrane. Positions 13–24 (RKGKGKKDRKGK) are enriched in basic residues. The Ig-like C2-type domain occupies 37–132 (PKLKEIKTQS…GNDTVTVNVT (96 aa)). Cysteines 57 and 116 form a disulfide. Positions 78 to 91 (GAKNKPDSKPEHIK) are enriched in basic and acidic residues. N124 and N130 each carry an N-linked (GlcNAc...) asparagine glycan. Positions 188–232 (HLIKCSDKEKTYCVNGGECYVLNGITSSNQFMCKCKPGFTGARCT) constitute an EGF-like domain. 3 disulfide bridges follow: C192–C206, C200–C220, and C222–C231. A helical membrane pass occupies residues 261 to 280 (VLTITGICIDLLVVGDMCVV). Residues 281-677 (DAYCKTKKQR…RKMTCKTLFI (397 aa)) lie on the Cytoplasmic side of the membrane. A compositionally biased stretch (basic and acidic residues) spans 294–315 (NDRLRQSLRERNKNITNKDNRP). Disordered stretches follow at residues 294–326 (NDRL…PRKN), 350–375 (ETSF…PSHS), 397–418 (SVEN…GIGG), 457–479 (VEFK…ESSL), and 503–617 (PPRL…FLSI). Residues 351-375 (TSFSTSHYTSTTHHSTTVTQTPSHS) show a composition bias toward low complexity. Residues 397–407 (SVENSRHTSPT) show a composition bias toward polar residues. The span at 505–515 (RLREKRYDRKT) shows a compositional bias: basic and acidic residues. A compositionally biased stretch (basic residues) spans 568–578 (VNSRRQKRTKP). A compositionally biased stretch (low complexity) spans 591 to 600 (DSSSESSTSE).

The protein belongs to the neuregulin family. Proteolytic cleavage close to the plasma membrane on the external face leads to the release of the soluble growth factor form. In terms of processing, extensive glycosylation precedes the proteolytic cleavage. In terms of tissue distribution, isoform alpha1 is expressed in brain and muscle. Isoform CRD is expressed in brain and spinal cord, but at very low level in muscle.

The protein resides in the cell membrane. It is found in the secreted. Direct ligand for the ERBB tyrosine kinase receptors. Induces expression of acetylcholine receptor in synaptic nuclei. This chain is Pro-neuregulin-1, membrane-bound isoform (nrg1), found in Xenopus laevis (African clawed frog).